The sequence spans 109 residues: uncharacterized protein (109 aa).

2 helical membrane-spanning segments follow: residues 18 to 38 and 48 to 68; these read TTLA…LLTL and AGLI…VIAL.

The protein resides in the cell membrane. This is an uncharacterized protein from Mycobacterium tuberculosis (strain CDC 1551 / Oshkosh).